Reading from the N-terminus, the 333-residue chain is Alpha-N-acetylgalactosaminide alpha-2,6-sialyltransferase 6 (333 aa).

The span at 1–12 shows a compositional bias: polar residues; sequence MACSRPPSQCDP. The segment at 1 to 27 is disordered; it reads MACSRPPSQCDPTTLPPGPPAGRWPLP. Residues 1-43 lie on the Cytoplasmic side of the membrane; sequence MACSRPPSQCDPTTLPPGPPAGRWPLPFSRRRREMSSNKEQRS. The chain crosses the membrane as a helical; Signal-anchor for type II membrane protein span at residues 44–64; it reads AVFVILFALITILILYSSNSA. The Lumenal portion of the chain corresponds to 65–333; the sequence is NEVFHYGSLR…GITFSHPSWT (269 aa). A glycan (N-linked (GlcNAc...) asparagine) is linked at asparagine 98. A disulfide bridge connects residues cysteine 108 and cysteine 256.

It belongs to the glycosyltransferase 29 family. In terms of tissue distribution, widely expressed, the gene expression is most abundant in colon, brain, liver, and heart.

The protein localises to the golgi apparatus membrane. It carries out the reaction a ganglioside GM1b (d18:1(4E)) + CMP-N-acetyl-beta-neuraminate = a ganglioside GD1alpha (d18:1(4E)) + CMP + H(+). The enzyme catalyses a ganglioside GD1a (d18:1(4E)) + CMP-N-acetyl-beta-neuraminate = a ganglioside GT1aalpha (d18:1(4E)) + CMP + H(+). The catalysed reaction is a ganglioside GT1b (d18:1(4E)) + CMP-N-acetyl-beta-neuraminate = a ganglioside GQ1balpha (d18:1(4E)) + CMP + H(+). It catalyses the reaction N-acetyl-alpha-neuraminosyl-(2-&gt;3)-beta-D-galactosyl-(1-&gt;3)-N-acetyl-beta-D-glucosaminyl-(1-&gt;3)-beta-D-galactosyl-(1-&gt;4)-beta-D-glucosyl-(1&lt;-&gt;1')-N-acyl-sphing-4-enine + CMP-N-acetyl-beta-neuraminate = N-acetyl-alpha-neuraminosyl-(2-&gt;3)-beta-D-galactosyl-(1-&gt;3)-[N-acetyl-alpha-neuraminosyl-(2-&gt;6)]-N-acetyl-beta-D-glucosaminyl-(1-&gt;3)-beta-D-galactosyl-(1-&gt;4)-beta-D-glucosyl-(1&lt;-&gt;1')-N-acyl-sphing-4-enine + CMP + H(+). It carries out the reaction a globoside MSGG + CMP-N-acetyl-beta-neuraminate = a globoside DSGG + CMP + H(+). The enzyme catalyses 3-O-[alpha-Neu5Ac-(2-&gt;3)-beta-D-Gal-(1-&gt;3)-alpha-D-GalNAc]-L-Ser-[protein] + CMP-N-acetyl-beta-neuraminate = a 3-O-{alpha-Neu5Ac-(2-&gt;3)-beta-D-Gal-(1-&gt;3)-[alpha-Neu5Ac-(2-&gt;6)]-alpha-D-GalNAc}-L-seryl-[protein] + CMP + H(+). The catalysed reaction is 3-O-[alpha-Neu5Ac-(2-&gt;3)-beta-D-Gal-(1-&gt;3)-alpha-D-GalNAc]-L-Thr-[protein] + CMP-N-acetyl-beta-neuraminate = a 3-O-{alpha-Neu5Ac-(2-&gt;3)-beta-D-Gal-(1-&gt;3)-[alpha-Neu5Ac-(2-&gt;6)]-alpha-D-GalNAc}-L-threonyl-[protein] + CMP + H(+). In terms of biological role, transfers the sialyl group (N-acetyl-alpha-neuraminyl or NeuAc) from CMP-NeuAc onto glycolipids, forming an alpha-2,6-linkage. Produces branched type disialyl structures by transfer of a sialyl group onto the GalNAc or GlcNAc residue inside backbone core chains having a terminal sialic acid with an alpha-2,3-linkage on Gal. ST6GalNAcVI prefers glycolipids to glycoproteins, predominantly catalyzing the biosynthesis of ganglioside GD1alpha from GM1b. Also has activity toward GD1a and GT1b, and can generate DSGG (disialylgalactosylgloboside) from MSGG (monosialylgalactosylgloboside). Besides GMb1, MSGG and other glycolipids, it shows activity towards sialyl Lc4Cer generating disialyl Lc4Cer, which can lead to the synthesis of disialyl Lewis a (Le(a)), suggested to be a cancer-associated antigen. The chain is Alpha-N-acetylgalactosaminide alpha-2,6-sialyltransferase 6 (St6galnac6) from Mus musculus (Mouse).